The chain runs to 266 residues: Small ribosomal subunit protein uS3 (266 aa).

The 69-residue stretch at 39–107 (VREYLKKKLK…PVHVNIEEIR (69 aa)) folds into the KH type-2 domain. The segment at 218–266 (EVAEDKRPRRNARPGDRRPRRDGEGGAPGARRGAPRRGAGKPEDGKTGE) is disordered. Composition is skewed to basic and acidic residues over residues 230–241 (RPGDRRPRRDGE) and 257–266 (GKPEDGKTGE).

It belongs to the universal ribosomal protein uS3 family. In terms of assembly, part of the 30S ribosomal subunit. Forms a tight complex with proteins S10 and S14.

Binds the lower part of the 30S subunit head. Binds mRNA in the 70S ribosome, positioning it for translation. This is Small ribosomal subunit protein uS3 from Burkholderia ambifaria (strain MC40-6).